Reading from the N-terminus, the 148-residue chain is Wheatwin-2 (148 aa).

The first 23 residues, Met-1 to Ala-23, serve as a signal peptide directing secretion. Gln-24 is subject to Pyrrolidone carboxylic acid. A Barwin domain is found at Gln-24 to Asp-148. Disulfide bonds link Cys-54–Cys-86, Cys-75–Cys-109, and Cys-89–Cys-146.

Monomer.

Functionally, shows antifungal activity towards B.cinerea and towards the wheat-specific pathogenic fungi F.culmorum and F.graminearum (groups 1 and 2). In Triticum aestivum (Wheat), this protein is Wheatwin-2 (PR4B).